The chain runs to 261 residues: Prostate-specific antigen (261 aa).

Residues Met-1–Ala-17 form the signal peptide. The propeptide at Ala-18–Arg-24 is activation peptide. The region spanning Ile-25–Val-258 is the Peptidase S1 domain. 5 disulfide bridges follow: Cys-31/Cys-173, Cys-50/Cys-66, Cys-152/Cys-219, Cys-184/Cys-198, and Cys-209/Cys-234. His-65 functions as the Charge relay system in the catalytic mechanism. The N-linked (GlcNAc...) asparagine glycan is linked to Asn-69. The active-site Charge relay system is Asp-120. Ser-213 functions as the Charge relay system in the catalytic mechanism.

Belongs to the peptidase S1 family. Kallikrein subfamily. In terms of assembly, forms a heterodimer with SERPINA5.

The protein resides in the secreted. The enzyme catalyses Preferential cleavage: -Tyr-|-Xaa-.. Inhibited by SERPINA5. Activity is strongly inhibited by Zn2+, 100 times more abundant in semen than in serum. This inhibition is relieved by exposure to semenogelins, which are avid zinc binders. Functionally, hydrolyzes semenogelin-1 thus leading to the liquefaction of the seminal coagulum. The protein is Prostate-specific antigen (KLK3) of Homo sapiens (Human).